Reading from the N-terminus, the 289-residue chain is MDVTWTVKYITEFVGTALLIIMGNGAVANVELKGTKAHAQSWMIIGWGYGLGVMLPAVAFGNITSQINPAFTLGLAASGLFPWAHVAQYIIAQVLGAMFGQLLIVMVYRPYYLKTQNPNAILGTFSTIDNVDDNDKKTRLGATINGFLNEFVGSFVLFFGAVAATNIFFGSQSITWMTNYLKGQGADVSSSDIMNQIWVQASGASASKMVAHLFLGFLVMGLVVALGGPTGPGLNPARDFGPRLVHSLLPKSVLGEAKGSSKWWYAWVPVLAPILASLAAVALFKMIYL.

The next 2 helical transmembrane spans lie at 10–30 (ITEF…VANV) and 41–61 (SWMI…VAFG). The short motif at 68 to 70 (NPA) is the NPA 1 element. A run of 3 helical transmembrane segments spans residues 87-107 (AQYI…IVMV), 151-171 (FVGS…FFGS), and 209-229 (MVAH…LGGP). The NPA 2 signature appears at 235–237 (NPA). The helical transmembrane segment at 264 to 284 (WYAWVPVLAPILASLAAVALF) threads the bilayer.

Belongs to the MIP/aquaporin (TC 1.A.8) family.

Its subcellular location is the cell membrane. In terms of biological role, mixed channel protein that transports both water and glycerol. In Lactococcus lactis subsp. lactis (strain IL1403) (Streptococcus lactis), this protein is Glycerol facilitator-aquaporin gla (gla).